The sequence spans 874 residues: Alanine--tRNA ligase (874 aa).

Zn(2+) contacts are provided by histidine 562, histidine 566, cysteine 665, and histidine 669.

It belongs to the class-II aminoacyl-tRNA synthetase family. Zn(2+) serves as cofactor.

Its subcellular location is the cytoplasm. It catalyses the reaction tRNA(Ala) + L-alanine + ATP = L-alanyl-tRNA(Ala) + AMP + diphosphate. Functionally, catalyzes the attachment of alanine to tRNA(Ala) in a two-step reaction: alanine is first activated by ATP to form Ala-AMP and then transferred to the acceptor end of tRNA(Ala). Also edits incorrectly charged Ser-tRNA(Ala) and Gly-tRNA(Ala) via its editing domain. In Pseudomonas fluorescens (strain Pf0-1), this protein is Alanine--tRNA ligase.